We begin with the raw amino-acid sequence, 483 residues long: tRNA-2-methylthio-N(6)-dimethylallyladenosine synthase (483 aa).

The MTTase N-terminal domain occupies 31 to 148; that stretch reads KKLYIETQGC…LPQMLDQHHA (118 aa). Residues Cys-40, Cys-77, Cys-111, Cys-192, Cys-196, and Cys-199 each coordinate [4Fe-4S] cluster. The region spanning 178–410 is the Radical SAM core domain; sequence RVEGFKAFVS…QQVIKQSSIE (233 aa). A TRAM domain is found at 413–477; it reads DAMLGKIERV…LNLVYGELLN (65 aa).

Belongs to the methylthiotransferase family. MiaB subfamily. Monomer. [4Fe-4S] cluster serves as cofactor.

The protein resides in the cytoplasm. It carries out the reaction N(6)-dimethylallyladenosine(37) in tRNA + (sulfur carrier)-SH + AH2 + 2 S-adenosyl-L-methionine = 2-methylsulfanyl-N(6)-dimethylallyladenosine(37) in tRNA + (sulfur carrier)-H + 5'-deoxyadenosine + L-methionine + A + S-adenosyl-L-homocysteine + 2 H(+). Catalyzes the methylthiolation of N6-(dimethylallyl)adenosine (i(6)A), leading to the formation of 2-methylthio-N6-(dimethylallyl)adenosine (ms(2)i(6)A) at position 37 in tRNAs that read codons beginning with uridine. This Acinetobacter baumannii (strain ACICU) protein is tRNA-2-methylthio-N(6)-dimethylallyladenosine synthase.